Here is a 950-residue protein sequence, read N- to C-terminus: Protocadherin alpha-1 (950 aa).

Residues 1 to 29 (MVFSRRGGLGARDLLLWLLLLAAWEVGSG) form the signal peptide. Cadherin domains lie at 30–133 (QLHY…PPVF), 157–242 (AADA…APLF), 243–350 (DQAV…APEL), 351–455 (AVTS…APAF), 456–565 (AQPE…APAL), and 588–678 (GHVV…APKA). Residues 30–697 (QLHYSIPEEA…GPEAALVDVN (668 aa)) are Extracellular-facing. Asn257 and Asn265 each carry an N-linked (GlcNAc...) asparagine glycan. An N-linked (GlcNAc...) asparagine glycan is attached at Asn548. Residues 698-718 (VYLIIAICAVSSLLVLTLLLY) traverse the membrane as a helical segment. Over 719 to 950 (TALRCSVPPT…GNSTTDNSDQ (232 aa)) the chain is Cytoplasmic. PXXP repeat units follow at residues 734-737 (PGKP), 799-802 (PRQP), 832-835 (PGGP), 873-876 (PGNP), and 891-894 (PGSP). The 5 X 4 AA repeats of P-X-X-P stretch occupies residues 734–894 (PGKPTLVCSS…PDKFIIPGSP (161 aa)). Disordered stretches follow at residues 752 to 808 (QQRR…DWRY), 828 to 856 (LRAG…EVSP), and 871 to 890 (YGPG…KFII). A disordered region spans residues 900 to 950 (RQEPTNSQIDKSDFITFGKKEETKKKKKKKKGNKTQEKKEKGNSTTDNSDQ). Residues 909-923 (DKSDFITFGKKEETK) show a composition bias toward basic and acidic residues.

The protein resides in the cell membrane. Its subcellular location is the secreted. In terms of biological role, potential calcium-dependent cell-adhesion protein. May be involved in the establishment and maintenance of specific neuronal connections in the brain. This Homo sapiens (Human) protein is Protocadherin alpha-1 (PCDHA1).